We begin with the raw amino-acid sequence, 417 residues long: Cobalamin binding intrinsic factor (417 aa).

The signal sequence occupies residues Met1–Thr18. 3 disulfide bridges follow: Cys26–Cys246, Cys103–Cys288, and Cys143–Cys182. Residue Asp171 participates in cob(II)alamin binding. Ser191 carries the phosphoserine modification. Asp222 and Gln270 together coordinate cob(II)alamin. Asn311 and Asn330 each carry an N-linked (GlcNAc...) asparagine glycan. Cob(II)alamin contacts are provided by residues Ser365–Val370 and Trp386–Leu395. An N-linked (GlcNAc...) asparagine glycan is attached at Asn413.

The protein belongs to the eukaryotic cobalamin transport proteins family. As to quaternary structure, interacts with CUBN (via CUB domains). As to expression, gastric mucosa.

Its subcellular location is the secreted. Promotes absorption of the essential vitamin cobalamin (Cbl) in the ileum. After interaction with CUBN, the CBLIF-cobalamin complex is internalized via receptor-mediated endocytosis. The polypeptide is Cobalamin binding intrinsic factor (Cblif) (Mus musculus (Mouse)).